Reading from the N-terminus, the 257-residue chain is Nuclear receptor subfamily 0 group B member 2 (257 aa).

The 242-residue stretch at 16–257 folds into the NR LBD domain; the sequence is SRPAILYALL…GLLGDMLLLR (242 aa). R57 carries the post-translational modification Symmetric dimethylarginine; by PRMT5.

The protein belongs to the nuclear hormone receptor family. NR0 subfamily. Interacts (via N-terminus) with NEUROD1 (via N-terminus and C-terminus). Interacts with ID2. Interacts with RORG, NFIL3, NR1D1 and BHLHE41. Heterodimer; efficient DNA binding requires dimerization with another bHLH protein. Interacts with RARA, RXRA, THRB, NR5A1, NR5A2, NR1I3, PPARA, PPARG and EID1. Interacts with HNF4A; the resulting heterodimer is transcriptionally inactive. Interacts with DDX3X; this interaction disrupts the interaction between HNF4 and NR0B2/SHP that forms inactive heterodimers and enhances the formation of active HNF4 homodimers. In terms of processing, arginine methylation by PRMT5 enhances repression activity of metabolic genes in liver in response to bile acid signaling, by increasing interaction with cofactors. Liver. Low levels of expression were detected in heart and pancreas.

It is found in the nucleus. The protein resides in the cytoplasm. In terms of biological role, transcriptional regulator that acts as a negative regulator of receptor-dependent signaling pathways. Specifically inhibits transactivation of the nuclear receptor with which it interacts. Inhibits transcriptional activity of NEUROD1 on E-box-containing promoter by interfering with the coactivation function of the p300/CBP-mediated transcription complex for NEUROD1. Essential component of the liver circadian clock which via its interaction with NR1D1 and RORG regulates NPAS2-mediated hepatic lipid metabolism. Regulates the circadian expression of cytochrome P450 (CYP) enzymes. Represses: NR5A2 and HNF4A to down-regulate CYP2C38, NFLI3 to up-regulate CYP2A5, BHLHE41/HNF1A axis to up-regulate CYP1A2, CYP2E1 and CYP3A11, and NR1D1 to up-regulate CYP2B10, CYP4A10 and CYP4A14. The sequence is that of Nuclear receptor subfamily 0 group B member 2 (NR0B2) from Homo sapiens (Human).